The following is a 295-amino-acid chain: 2-methylisocitrate lyase (295 aa).

Substrate is bound at residue 45 to 47 (SGG). 2 residues coordinate Mg(2+): aspartate 85 and aspartate 87. Substrate contacts are provided by residues 123 to 124 (CG), arginine 158, glutamate 188, 210 to 212 (NIT), arginine 241, and arginine 270.

Belongs to the isocitrate lyase/PEP mutase superfamily. Methylisocitrate lyase family. Homotetramer; dimer of dimers. Requires Mg(2+) as cofactor.

It carries out the reaction (2S,3R)-3-hydroxybutane-1,2,3-tricarboxylate = pyruvate + succinate. It participates in organic acid metabolism; propanoate degradation. Involved in the catabolism of short chain fatty acids (SCFA) via the 2-methylcitrate cycle I (propionate degradation route). Catalyzes the thermodynamically favored C-C bond cleavage of (2R,3S)-2-methylisocitrate to yield pyruvate and succinate via an alpha-carboxy-carbanion intermediate. The sequence is that of 2-methylisocitrate lyase from Salmonella typhimurium (strain LT2 / SGSC1412 / ATCC 700720).